The chain runs to 337 residues: Heat-inducible transcription repressor HrcA (337 aa).

The protein belongs to the HrcA family.

Functionally, negative regulator of class I heat shock genes (grpE-dnaK-dnaJ and groELS operons). Prevents heat-shock induction of these operons. The polypeptide is Heat-inducible transcription repressor HrcA (Metamycoplasma arthritidis (strain 158L3-1) (Mycoplasma arthritidis)).